Consider the following 324-residue polypeptide: Glyoxylate/hydroxypyruvate reductase B (324 aa).

Catalysis depends on residues Arg-237 and Glu-266. The active-site Proton donor is the His-285.

The protein belongs to the D-isomer specific 2-hydroxyacid dehydrogenase family. GhrB subfamily. Homodimer.

It is found in the cytoplasm. It carries out the reaction glycolate + NADP(+) = glyoxylate + NADPH + H(+). It catalyses the reaction (R)-glycerate + NAD(+) = 3-hydroxypyruvate + NADH + H(+). The enzyme catalyses (R)-glycerate + NADP(+) = 3-hydroxypyruvate + NADPH + H(+). Functionally, catalyzes the NADPH-dependent reduction of glyoxylate and hydroxypyruvate into glycolate and glycerate, respectively. This Escherichia coli (strain ATCC 8739 / DSM 1576 / NBRC 3972 / NCIMB 8545 / WDCM 00012 / Crooks) protein is Glyoxylate/hydroxypyruvate reductase B.